A 331-amino-acid chain; its full sequence is D-aspartate oxidase 2 (331 aa).

4 residues coordinate FAD: D35, K36, S43, and G307.

Belongs to the DAMOX/DASOX family. Requires FAD as cofactor.

The protein resides in the cytoplasm. It catalyses the reaction D-aspartate + O2 + H2O = oxaloacetate + H2O2 + NH4(+). The catalysed reaction is D-glutamate + O2 + H2O = H2O2 + 2-oxoglutarate + NH4(+). Selectively catalyzes the oxidative deamination of acidic amino acids. May play a role in the egg-laying events and early development of the worm, in addition to quality control of the germ cells. This Caenorhabditis briggsae protein is D-aspartate oxidase 2.